A 62-amino-acid chain; its full sequence is Photosystem II reaction center protein Z (62 aa).

2 helical membrane passes run 8–28 and 41–61; these read AVFA…VVLA and FSGA…NSFI.

The protein belongs to the PsbZ family. In terms of assembly, PSII is composed of 1 copy each of membrane proteins PsbA, PsbB, PsbC, PsbD, PsbE, PsbF, PsbH, PsbI, PsbJ, PsbK, PsbL, PsbM, PsbT, PsbY, PsbZ, Psb30/Ycf12, at least 3 peripheral proteins of the oxygen-evolving complex and a large number of cofactors. It forms dimeric complexes.

The protein localises to the plastid. Its subcellular location is the chloroplast thylakoid membrane. May control the interaction of photosystem II (PSII) cores with the light-harvesting antenna, regulates electron flow through the 2 photosystem reaction centers. PSII is a light-driven water plastoquinone oxidoreductase, using light energy to abstract electrons from H(2)O, generating a proton gradient subsequently used for ATP formation. This Marchantia polymorpha (Common liverwort) protein is Photosystem II reaction center protein Z.